The primary structure comprises 375 residues: UDP-N-acetylglucosamine--N-acetylmuramyl-(pentapeptide) pyrophosphoryl-undecaprenol N-acetylglucosamine transferase (375 aa).

UDP-N-acetyl-alpha-D-glucosamine-binding positions include 13–15, asparagine 124, arginine 165, serine 193, and glutamine 294; that span reads TGG.

The protein belongs to the glycosyltransferase 28 family. MurG subfamily.

The protein localises to the cell inner membrane. It catalyses the reaction di-trans,octa-cis-undecaprenyl diphospho-N-acetyl-alpha-D-muramoyl-L-alanyl-D-glutamyl-meso-2,6-diaminopimeloyl-D-alanyl-D-alanine + UDP-N-acetyl-alpha-D-glucosamine = di-trans,octa-cis-undecaprenyl diphospho-[N-acetyl-alpha-D-glucosaminyl-(1-&gt;4)]-N-acetyl-alpha-D-muramoyl-L-alanyl-D-glutamyl-meso-2,6-diaminopimeloyl-D-alanyl-D-alanine + UDP + H(+). Its pathway is cell wall biogenesis; peptidoglycan biosynthesis. In terms of biological role, cell wall formation. Catalyzes the transfer of a GlcNAc subunit on undecaprenyl-pyrophosphoryl-MurNAc-pentapeptide (lipid intermediate I) to form undecaprenyl-pyrophosphoryl-MurNAc-(pentapeptide)GlcNAc (lipid intermediate II). The polypeptide is UDP-N-acetylglucosamine--N-acetylmuramyl-(pentapeptide) pyrophosphoryl-undecaprenol N-acetylglucosamine transferase (Mesorhizobium japonicum (strain LMG 29417 / CECT 9101 / MAFF 303099) (Mesorhizobium loti (strain MAFF 303099))).